The primary structure comprises 312 residues: DNA-directed RNA polymerase subunit alpha (312 aa).

Residues 1–229 (MLQYQIDRID…ELFQPLATVS (229 aa)) form an alpha N-terminal domain (alpha-NTD) region. The tract at residues 239–312 (EPAAEAQIPL…ISIPQSRTSA (74 aa)) is alpha C-terminal domain (alpha-CTD).

It belongs to the RNA polymerase alpha chain family. As to quaternary structure, in cyanobacteria the RNAP catalytic core is composed of 2 alpha, 1 beta, 1 beta', 1 gamma and 1 omega subunit. When a sigma factor is associated with the core the holoenzyme is formed, which can initiate transcription.

The enzyme catalyses RNA(n) + a ribonucleoside 5'-triphosphate = RNA(n+1) + diphosphate. In terms of biological role, DNA-dependent RNA polymerase catalyzes the transcription of DNA into RNA using the four ribonucleoside triphosphates as substrates. The protein is DNA-directed RNA polymerase subunit alpha of Prochlorococcus marinus (strain NATL1A).